A 115-amino-acid polypeptide reads, in one-letter code: NADH-ubiquinone oxidoreductase chain 3 (115 aa).

Transmembrane regions (helical) follow at residues 3–23 (LLLT…IAFW), 55–75 (FFLV…LLPL), and 84–104 (LNTM…SLAY).

It belongs to the complex I subunit 3 family. Core subunit of respiratory chain NADH dehydrogenase (Complex I) which is composed of 45 different subunits. Interacts with TMEM186. Interacts with TMEM242.

The protein localises to the mitochondrion inner membrane. It catalyses the reaction a ubiquinone + NADH + 5 H(+)(in) = a ubiquinol + NAD(+) + 4 H(+)(out). Functionally, core subunit of the mitochondrial membrane respiratory chain NADH dehydrogenase (Complex I) which catalyzes electron transfer from NADH through the respiratory chain, using ubiquinone as an electron acceptor. Essential for the catalytic activity of complex I. This chain is NADH-ubiquinone oxidoreductase chain 3, found in Balaenoptera musculus (Blue whale).